The chain runs to 354 residues: Methylthioribose-1-phosphate isomerase (354 aa).

Residues 54 to 56 (RGA), Arg97, and Gln204 contribute to the substrate site. Asp245 functions as the Proton donor in the catalytic mechanism. Position 255 to 256 (255 to 256 (NK)) interacts with substrate.

This sequence belongs to the eIF-2B alpha/beta/delta subunits family. MtnA subfamily.

It carries out the reaction 5-(methylsulfanyl)-alpha-D-ribose 1-phosphate = 5-(methylsulfanyl)-D-ribulose 1-phosphate. Its pathway is amino-acid biosynthesis; L-methionine biosynthesis via salvage pathway; L-methionine from S-methyl-5-thio-alpha-D-ribose 1-phosphate: step 1/6. Catalyzes the interconversion of methylthioribose-1-phosphate (MTR-1-P) into methylthioribulose-1-phosphate (MTRu-1-P). This chain is Methylthioribose-1-phosphate isomerase, found in Albidiferax ferrireducens (strain ATCC BAA-621 / DSM 15236 / T118) (Rhodoferax ferrireducens).